A 718-amino-acid chain; its full sequence is Methionine--tRNA ligase (718 aa).

The 'HIGH' region motif lies at 27–37 (PYANGQIHIGH). Zn(2+) is bound by residues Cys158, Cys161, Cys171, and Cys174. The 'KMSKS' region motif lies at 348–352 (KMSKS). Position 351 (Lys351) interacts with ATP. A tRNA-binding domain is found at 612–718 (DFAKIDLRIA…SGAKPGMRVK (107 aa)).

The protein belongs to the class-I aminoacyl-tRNA synthetase family. MetG type 1 subfamily. As to quaternary structure, homodimer. It depends on Zn(2+) as a cofactor.

It is found in the cytoplasm. The catalysed reaction is tRNA(Met) + L-methionine + ATP = L-methionyl-tRNA(Met) + AMP + diphosphate. In terms of biological role, is required not only for elongation of protein synthesis but also for the initiation of all mRNA translation through initiator tRNA(fMet) aminoacylation. This chain is Methionine--tRNA ligase, found in Burkholderia orbicola (strain AU 1054).